The following is a 119-amino-acid chain: Large ribosomal subunit protein uL14 (119 aa).

This sequence belongs to the universal ribosomal protein uL14 family. In terms of assembly, part of the 50S ribosomal subunit. Forms a cluster with proteins L3 and L19. In the 70S ribosome, L14 and L19 interact and together make contacts with the 16S rRNA in bridges B5 and B8.

In terms of biological role, binds to 23S rRNA. Forms part of two intersubunit bridges in the 70S ribosome. The chain is Large ribosomal subunit protein uL14 from Wolbachia pipientis subsp. Culex pipiens (strain wPip).